The primary structure comprises 322 residues: NADH oxidoreductase HCR (322 aa).

In terms of domain architecture, FAD-binding FR-type spans 7-107; it reads QCPWRMQVHH…SDAMGEFTCD (101 aa). An oxidoreductase region spans residues 111–213; it reads EDKFLLLAAG…APYMDWVEQE (103 aa). The 86-residue stretch at 237–322 folds into the 2Fe-2S ferredoxin-type domain; that stretch reads SGLKFTKLQP…CHPQGDLVLA (86 aa). [2Fe-2S] cluster-binding residues include cysteine 273, cysteine 278, cysteine 281, and cysteine 311.

In the N-terminal section; belongs to the FAD-binding oxidoreductase type 6 family. The cofactor is [2Fe-2S] cluster. FAD is required as a cofactor.

In terms of biological role, NADH oxidoreductase acting in concert with HCP. In Escherichia coli (strain K12), this protein is NADH oxidoreductase HCR (hcr).